The following is a 508-amino-acid chain: MSSPDGPSFPSGPLSGGASPSGDEGFFPFVLERRDSFLGGGPGPEEPEDLALQLQQKEKDLLLAAELGKMLLERNEELRRQLETLSAQHLEREERLQQENHELRRGLAARGAEWEARAVELEGDVEALRAQLGEQRSEQQDSGRERARALSELSEQNLRLSQQLAQASQTEQELQRELDALRGQCQAQALAGAELRTRLESLQGENQMLQSRRQDLEAQIRGLREEVEKGEGRLQTTHEELLLLRRERREHSLELERARSEAGEALSALRRLQRRVSELEEESRLQDADVSAASLQSELAHSLDDGDQGQGADAPGDTPTTRSPKTRKASSPQPSPPEEILEPPKKRTSLSPAEILEEKEVEVAKLQDEISLQQAELQSLREELQRQKELRAQEDPGEALHSALSDRDEAVNKALELSLQLNRVSLERDSLSRELLRAIRQKVALTQELEAWQDDMQVVIGQQLRSQRQKELSASASSSTPRRAAPRFSLRLGPGPAGGFLSNLFRRT.

Over residues 1–22 (MSSPDGPSFPSGPLSGGASPSG) the composition is skewed to low complexity. 3 disordered regions span residues 1 to 27 (MSSP…EGFF), 132 to 152 (LGEQ…ALSE), and 300 to 351 (AHSL…TSLS). 2 coiled-coil regions span residues 64–300 (AAEL…SELA) and 353–458 (AEIL…DMQV). Basic and acidic residues predominate over residues 135-149 (QRSEQQDSGRERARA). A disordered region spans residues 470–491 (KELSASASSSTPRRAAPRFSLR). Over residues 473 to 489 (SASASSSTPRRAAPRFS) the composition is skewed to low complexity.

It belongs to the BICDR family. As to quaternary structure, interacts with RAB13.

The sequence is that of BICD family-like cargo adapter 2 (BICDL2) from Homo sapiens (Human).